A 585-amino-acid polypeptide reads, in one-letter code: Cytochrome P450 monooxygenase AOL_s00215g278 (585 aa).

Cysteine 518 is a heme binding site.

This sequence belongs to the cytochrome P450 family. Requires heme as cofactor.

Its pathway is secondary metabolite biosynthesis; terpenoid biosynthesis. In terms of biological role, cytochrome P450 monooxygenase; part of the gene cluster that mediates the biosynthesis of sesquiterpenyl epoxy-cyclohexenoids (SECs) such as anthrobotrisins and arthrosporols, metabolites that possess a novel hybrid carbon skeleton consisting of a polyketide-derived epoxycyclohexenol combined with a terpenoid-derived monocyclic sesquiterpenol substructure (PKS-PTS hybrid). The SEC pathway plays an important role for fungal soil colonization via decreasing fungal nematode-capturing ability. Within the pathway, the cytochrome P450 monooxygenase AOL_s00215g278 plays a role in the oxygenation of the phenol moiety, most likely in the epoxy formation. The pathway begins with the biosynthesis of 6-methylsalicylic acid (6-MSA), the first precursor of the polyketide-derived epoxycyclohexenol in arthrosporols, by the polyketide synthase (PKS) AOL_s00215g283 via condensation of 1 acetate and 3 malonate units. The 6-methylsalicylic acid decarboxylase AOL_s00215g281 then catalyzes the decarboxylation of 6-methylsalicylic acid to yield m-cresol. The cytochrome P450 monooxygenase AOL_s00215g282 further oxidizes m-cresol to yield toluquinol. With the assistance of the oxidoreductase AOL_s00215g277, the polyprenyl transferase AOL_s00215g276 catalyzes the farnesylation of toluquinol to produce farnesyl hydroquinone, the hybrid precursor for biosynthesis of SECs. Farnesyl hydroquinone undergoes epoxidation and then subsequent dehydrogenation to form farnesyl epoxy-quinone, the first and simplest SEC. The cytochrome P450 monooxygenase AOL_s00215g278 and the FAD-dependent monooxygenase AOL_s00215g279 might be involved in the oxygenation of the phenol moiety, most likely in the epoxy formation. The cytochrome P450 monooxygenases AOL_s00215g274 and AOL_s00215g280 are involved in specific regional ketone reductions at respectively C-4 and C-1 of farnesyl epoxy-quinone PubMed:33823587. The protein is Cytochrome P450 monooxygenase AOL_s00215g278 of Arthrobotrys oligospora (strain ATCC 24927 / CBS 115.81 / DSM 1491) (Nematode-trapping fungus).